Here is a 456-residue protein sequence, read N- to C-terminus: MSNRPMSVVILAAGKGTRMYSDLPKVLHLLAGKPMVQHVIDAARELNAQRVNLVYGHGGELLKTALDDRSLNWVLQAEQLGTGHAMQQAAPYFADDEDILMLYGDVPLITGETLRRLQAVKPDGGIGLLTVNLANPTGYGRIIRENGRVVGIIEQKDAAPEQLAIGEINTGILLAGGADLKRWLSKLTNNNAQGEYYITDIIALAHQEGRQIEAVHPVRTTETDGVNNRLQLATLERVYQAEQAEKLLLSGVMLQDPARFDLRGTLEHGRDVVIDTNVIIEGHVKLGNRVKIGSGCVIKNSVIADDCIISPYSVIEDAQLAPDCSVGPFARLRPGSELAEGAHVGNFVEMKKARLGKGSKAGHLSYLGDAEIGANVNIGAGTITCNYDGVNKSKTIIGDDVFVGSDTQLIAPVSVAAGVTIAAGTTIMRNVPAAGLVYNRKEQQLNASWQRPQKKK.

Residues 1–229 form a pyrophosphorylase region; sequence MSNRPMSVVI…TTETDGVNNR (229 aa). UDP-N-acetyl-alpha-D-glucosamine is bound by residues 11–14, Lys-25, Gln-76, 81–82, 103–105, Gly-140, Glu-154, Asn-169, and Asn-227; these read LAAG, GT, and YGD. Asp-105 is a binding site for Mg(2+). Asn-227 serves as a coordination point for Mg(2+). The segment at 230–250 is linker; sequence LQLATLERVYQAEQAEKLLLS. The N-acetyltransferase stretch occupies residues 251 to 456; it reads GVMLQDPARF…ASWQRPQKKK (206 aa). UDP-N-acetyl-alpha-D-glucosamine is bound by residues Arg-333 and Lys-351. His-363 functions as the Proton acceptor in the catalytic mechanism. 2 residues coordinate UDP-N-acetyl-alpha-D-glucosamine: Tyr-366 and Asn-377. Residues Ala-380, 386-387, Ser-405, Ala-423, and Arg-440 contribute to the acetyl-CoA site; that span reads NY.

The protein in the N-terminal section; belongs to the N-acetylglucosamine-1-phosphate uridyltransferase family. In the C-terminal section; belongs to the transferase hexapeptide repeat family. Homotrimer. Mg(2+) serves as cofactor.

It is found in the cytoplasm. The catalysed reaction is alpha-D-glucosamine 1-phosphate + acetyl-CoA = N-acetyl-alpha-D-glucosamine 1-phosphate + CoA + H(+). It catalyses the reaction N-acetyl-alpha-D-glucosamine 1-phosphate + UTP + H(+) = UDP-N-acetyl-alpha-D-glucosamine + diphosphate. It participates in nucleotide-sugar biosynthesis; UDP-N-acetyl-alpha-D-glucosamine biosynthesis; N-acetyl-alpha-D-glucosamine 1-phosphate from alpha-D-glucosamine 6-phosphate (route II): step 2/2. The protein operates within nucleotide-sugar biosynthesis; UDP-N-acetyl-alpha-D-glucosamine biosynthesis; UDP-N-acetyl-alpha-D-glucosamine from N-acetyl-alpha-D-glucosamine 1-phosphate: step 1/1. Its pathway is bacterial outer membrane biogenesis; LPS lipid A biosynthesis. In terms of biological role, catalyzes the last two sequential reactions in the de novo biosynthetic pathway for UDP-N-acetylglucosamine (UDP-GlcNAc). The C-terminal domain catalyzes the transfer of acetyl group from acetyl coenzyme A to glucosamine-1-phosphate (GlcN-1-P) to produce N-acetylglucosamine-1-phosphate (GlcNAc-1-P), which is converted into UDP-GlcNAc by the transfer of uridine 5-monophosphate (from uridine 5-triphosphate), a reaction catalyzed by the N-terminal domain. This is Bifunctional protein GlmU from Erwinia tasmaniensis (strain DSM 17950 / CFBP 7177 / CIP 109463 / NCPPB 4357 / Et1/99).